The primary structure comprises 141 residues: Nucleoside triphosphatase NudI (141 aa).

A Nudix hydrolase domain is found at 1 to 141; sequence MRQRTIVCPL…RHTLALKGLL (141 aa). The short motif at 38–59 is the Nudix box element; it reads GGVEPGERIEEALRREIREELG.

It belongs to the Nudix hydrolase family. NudI subfamily. In terms of assembly, monomer. Mg(2+) is required as a cofactor.

The catalysed reaction is a ribonucleoside 5'-triphosphate + H2O = a ribonucleoside 5'-phosphate + diphosphate + H(+). It catalyses the reaction a 2'-deoxyribonucleoside 5'-triphosphate + H2O = a 2'-deoxyribonucleoside 5'-phosphate + diphosphate + H(+). The enzyme catalyses dUTP + H2O = dUMP + diphosphate + H(+). It carries out the reaction dTTP + H2O = dTMP + diphosphate + H(+). The catalysed reaction is dCTP + H2O = dCMP + diphosphate + H(+). Its function is as follows. Catalyzes the hydrolysis of nucleoside triphosphates, with a preference for pyrimidine deoxynucleoside triphosphates (dUTP, dTTP and dCTP). The protein is Nucleoside triphosphatase NudI of Salmonella heidelberg (strain SL476).